We begin with the raw amino-acid sequence, 586 residues long: Transmembrane protease serine 13 (586 aa).

2 disordered regions span residues 1-115 and 131-157; these read MERD…VTTS and PIRS…LPKF. Residues 1 to 165 are Cytoplasmic-facing; it reads MERDSHGNAS…KFTWREGQKQ (165 aa). Residues 9–13 form a 1-1 repeat; that stretch reads ASPAR. Positions 9–93 are 13 X 5 AA repeats of A-S-P-A-[GLQR]; the sequence is ASPARTPSAG…ASPARASPAL (85 aa). Residues 14–18 form a 2-1; approximate repeat; that stretch reads TPSAG. A compositionally biased stretch (low complexity) spans 14 to 52; the sequence is TPSAGASPAQASPAGTPPGRASPAQASPAQASPAGTPPG. The interval 14 to 68 is 4 X 5 AA repeats of T-P-P-G-R; the sequence is TPSAGASPAQASPAGTPPGRASPAQASPAQASPAGTPPGRASPAQASPAGTPPGR. 10 repeat units span residues 19–23, 24–28, 29–33, 34–38, 39–43, 44–48, 49–53, 54–58, 59–63, and 64–68. The 1-9; approximate repeat unit spans residues 69–78; sequence ASPGRASPAQ. Low complexity-rich tracts occupy residues 69-111 and 133-144; these read ASPG…RSAS and RSSPARSAPATR. 3 consecutive repeat copies span residues 79–83, 84–88, and 89–93. A helical; Signal-anchor for type II membrane protein transmembrane segment spans residues 166 to 186; that stretch reads LPLIGCVLLLIALVVSLIILF. Residues 187–586 are Extracellular-facing; it reads QFWQGHTGIR…GGDPGGAPRL (400 aa). The SRCR domain occupies 195–325; the sequence is IRYKEQRESC…HCGLRAMTGR (131 aa). In terms of domain architecture, LDL-receptor class A spans 204-226; the sequence is CPKHAVRCDGVVDCKLKSDELGC. 3 cysteine pairs are disulfide-bonded: C250-C314, C263-C317, and C351-C367. N-linked (GlcNAc...) asparagine glycans are attached at residues N255 and N292. The Peptidase S1 domain occupies 326–559; the sequence is IVGGALASDS…VLPWIYSKME (234 aa). The active-site Charge relay system is H366. An N-linked (GlcNAc...) asparagine glycan is attached at N405. D414 functions as the Charge relay system in the catalytic mechanism. Residue N445 is glycosylated (N-linked (GlcNAc...) asparagine). Cystine bridges form between C448/C517, C480/C496, and C507/C535. The Charge relay system role is filled by S511. Over residues 565–574 the composition is skewed to polar residues; the sequence is QDTAPSRLGT. The segment at 565–586 is disordered; the sequence is QDTAPSRLGTSSGGDPGGAPRL. Residues 575 to 586 are compositionally biased toward gly residues; the sequence is SSGGDPGGAPRL.

Belongs to the peptidase S1 family. As to quaternary structure, interacts with SPINT1/HAI-1; the interaction promotes the phosphorylation and cell membrane localization of TMPRSS13. Interacts with SPINT2/HAI-2; the interaction promotes the phosphorylation and cell membrane localization of TMPRSS13. Post-translationally, the inactive zymogen is post-translationally modified and then trafficked to the cell surface, whereby it undergoes autocatalytic cleavage resulting in an activated form that is released extracellularly. Phosphorylation is required for localization at the cell surface. Phosphorylation increases following inhibition of protease activity by SPINT2/HAI-2. In terms of processing, N-glycosylation of Asn-405 and Asn-445 is required for exit from the endoplasmic reticulum and trafficking to the cell surface. Also required for autocleavage of the zymogen, activation and secretion of the mature protein. As to expression, expressed in placenta. In terms of tissue distribution, predominantly expressed in lung, placenta, pancreas, and prostate. Expressed in lung, placenta, pancreas, and prostate. Weakly expressed in testis and peripheral blood lymphocytes.

The protein localises to the cell membrane. It localises to the secreted. It is found in the cytoplasm. Its activity is regulated as follows. Cleavage of HGF is inhibited by SPINT1/HAI-1 via the BPTI/Kunitz inhibitor 1 domain. Functionally, serine protease. Cleaves the proform of PRSS8/prostasin to form the active protein. Cleaves the proform of HGF to form the active protein which promotes MAPK signaling. Promotes the formation of the stratum corneum and subsequently the epidermal barrier in embryos. The polypeptide is Transmembrane protease serine 13 (TMPRSS13) (Homo sapiens (Human)).